We begin with the raw amino-acid sequence, 915 residues long: DNA (cytosine-5)-methyltransferase 3 (915 aa).

Low complexity predominate over residues 1–14; that stretch reads MAPSSPSSARPTRA. Disordered stretches follow at residues 1-107 and 152-171; these read MAPS…AEEQ and HSNW…PEED. Residues 21-30 are compositionally biased toward basic and acidic residues; that stretch reads AMAEEIHQNQ. The segment covering 42–57 has biased composition (basic residues); that stretch reads AKRRRKAASSGKKPKP. Over residues 71–80 the composition is skewed to basic and acidic residues; the sequence is KKGETEKTEP. Residues 81–107 are compositionally biased toward acidic residues; the sequence is VVDDVCAEEPDEEELAMGEEEAEAEEQ. The 126-residue stretch at 188 to 313 folds into the BAH domain; sequence IVYCLGDDVY…VAYSTFANIS (126 aa). Positions 315–328 are enriched in polar residues; that stretch reads ENGQSGSETASGIS. The tract at residues 315-338 is disordered; sequence ENGQSGSETASGISSDDAGLETSS. The SAM-dependent MTase C5-type domain maps to 345–876; it reads ATLLDLYSGC…YCLGQAYLGE (532 aa). Residues 445–508 form the Chromo domain; sequence FVVQKLIGIR…EGRKRKILPL (64 aa). Cys-521 is a catalytic residue.

It belongs to the class I-like SAM-binding methyltransferase superfamily. C5-methyltransferase family.

The protein localises to the nucleus. It carries out the reaction a 2'-deoxycytidine in DNA + S-adenosyl-L-methionine = a 5-methyl-2'-deoxycytidine in DNA + S-adenosyl-L-homocysteine + H(+). Its function is as follows. May be involved in the CpXpG methylation and in gene silencing. This chain is DNA (cytosine-5)-methyltransferase 3 (DMT105), found in Zea mays (Maize).